The sequence spans 95 residues: Small ribosomal subunit protein uS19 (95 aa).

The segment at 73 to 95 (EFSPTRTYRGHGADKNAKGSKKK) is disordered.

It belongs to the universal ribosomal protein uS19 family.

In terms of biological role, protein S19 forms a complex with S13 that binds strongly to the 16S ribosomal RNA. The polypeptide is Small ribosomal subunit protein uS19 (Deinococcus radiodurans (strain ATCC 13939 / DSM 20539 / JCM 16871 / CCUG 27074 / LMG 4051 / NBRC 15346 / NCIMB 9279 / VKM B-1422 / R1)).